Reading from the N-terminus, the 315-residue chain is Replication factor C small subunit (315 aa).

43–50 (GSPGVGKT) contacts ATP.

Belongs to the activator 1 small subunits family. RfcS subfamily. As to quaternary structure, heteromultimer composed of small subunits (RfcS) and large subunits (RfcL).

Functionally, part of the RFC clamp loader complex which loads the PCNA sliding clamp onto DNA. This is Replication factor C small subunit from Methanococcus vannielii (strain ATCC 35089 / DSM 1224 / JCM 13029 / OCM 148 / SB).